The chain runs to 244 residues: Methylthioribulose-1-phosphate dehydratase (244 aa).

C89 is a substrate binding site. Positions 107 and 109 each coordinate Zn(2+). E130 functions as the Proton donor/acceptor in the catalytic mechanism. H192 is a binding site for Zn(2+).

Belongs to the aldolase class II family. MtnB subfamily. Requires Zn(2+) as cofactor.

The protein localises to the cytoplasm. It catalyses the reaction 5-(methylsulfanyl)-D-ribulose 1-phosphate = 5-methylsulfanyl-2,3-dioxopentyl phosphate + H2O. The protein operates within amino-acid biosynthesis; L-methionine biosynthesis via salvage pathway; L-methionine from S-methyl-5-thio-alpha-D-ribose 1-phosphate: step 2/6. Its function is as follows. Catalyzes the dehydration of methylthioribulose-1-phosphate (MTRu-1-P) into 2,3-diketo-5-methylthiopentyl-1-phosphate (DK-MTP-1-P). The protein is Methylthioribulose-1-phosphate dehydratase of Saccharomyces cerevisiae (strain AWRI1631) (Baker's yeast).